Reading from the N-terminus, the 92-residue chain is Toxin RelE3 (92 aa).

It belongs to the RelE toxin family.

Its function is as follows. Toxic component of a type II toxin-antitoxin (TA) system. Its toxic effect is neutralized by coexpression with cognate antitoxin RelB3 but no other ParD or RelB antitoxin. This chain is Toxin RelE3 (relE3), found in Caulobacter vibrioides (strain ATCC 19089 / CIP 103742 / CB 15) (Caulobacter crescentus).